We begin with the raw amino-acid sequence, 283 residues long: 4-diphosphocytidyl-2-C-methyl-D-erythritol kinase (283 aa).

Residue Lys-10 is part of the active site. 99 to 109 (PMGGGLGGGSS) lines the ATP pocket. Asp-141 is a catalytic residue.

This sequence belongs to the GHMP kinase family. IspE subfamily. In terms of assembly, homodimer.

The catalysed reaction is 4-CDP-2-C-methyl-D-erythritol + ATP = 4-CDP-2-C-methyl-D-erythritol 2-phosphate + ADP + H(+). It functions in the pathway isoprenoid biosynthesis; isopentenyl diphosphate biosynthesis via DXP pathway; isopentenyl diphosphate from 1-deoxy-D-xylulose 5-phosphate: step 3/6. Catalyzes the phosphorylation of the position 2 hydroxy group of 4-diphosphocytidyl-2C-methyl-D-erythritol. This chain is 4-diphosphocytidyl-2-C-methyl-D-erythritol kinase, found in Escherichia coli O9:H4 (strain HS).